Reading from the N-terminus, the 329-residue chain is MTKTTILLLCGGGSSEHEISLVSANYIQQQLELTPEFHVIRVEMKKEGWFSEQGALVYLDTNSATLNSDKASYPIDFVVPCIHGFPGETGDIQSMLELAGIPYLGCGPEASANSFNKITSKLWYDALDIPNTPYLFLTQNTPSSIDKAKQAFGHWGSIFVKAARQGSSVGCYKVTTEDQIAPAIEAAFGFSEQVLVEQAVKPRELEVSAYEMNGKLYISKPGEVIAPEGTFYSYEEKYSANSHARTVLEAENLTEKHKELIQTYAERVFIHMKLRHLSRIDFFLTQEGQIYLNEVNTFPGMTPISMFPKMLEHNGHRFSEFLAQCVTNT.

An ATP-grasp domain is found at 121–327 (KLWYDALDIP…FSEFLAQCVT (207 aa)). An ATP-binding site is contributed by 151 to 206 (AFGHWGSIFVKAARQGSSVGCYKVTTEDQIAPAIEAAFGFSEQVLVEQAVKPRELE). Positions 281, 294, and 296 each coordinate Mg(2+).

This sequence belongs to the D-alanine--D-alanine ligase family. Mg(2+) serves as cofactor. Mn(2+) is required as a cofactor.

It localises to the cytoplasm. The enzyme catalyses 2 D-alanine + ATP = D-alanyl-D-alanine + ADP + phosphate + H(+). The protein operates within cell wall biogenesis; peptidoglycan biosynthesis. In terms of biological role, cell wall formation. The polypeptide is D-alanine--D-alanine ligase (Vibrio cholerae serotype O1 (strain ATCC 39541 / Classical Ogawa 395 / O395)).